The chain runs to 344 residues: Bifunctional trans-3-hydroxy-L-proline dehydratase/2-epimerase (344 aa).

Serine 90 (proton acceptor) is an active-site residue. Substrate-binding positions include 91–92 (GS), aspartate 252, and 257–258 (GT).

Belongs to the proline racemase family.

The enzyme catalyses trans-3-hydroxy-L-proline = 1-pyrroline-2-carboxylate + H2O. The catalysed reaction is trans-3-hydroxy-L-proline = cis-3-hydroxy-D-proline. Functionally, bifunctional enzyme catalyzing both the dehydration of trans-3-hydroxy-L-proline (t3LHyp) to Delta(1)-pyrroline-2-carboxylate (Pyr2C) and 2-epimerization of t3LHyp to cis-3-hydroxy-D-proline (c3DHyp). No dehydratase activity with L-proline, trans-4-hydroxy-L-proline (t4LHyp), cis-4-hydroxy-L-proline (c4LHyp), D-proline, cis-4-hydroxy-D-proline (c4DHyp), trans-4-hydroxy-D-proline (t4DHyp) or L-serine as substrates. Displays neither t4LHyp epimerase nor proline racemase activity. Is likely involved in a degradation pathway that converts t3LHyp to L-proline, which would allow P.aeruginosa to grow on t3LHyp as a sole carbon source. The polypeptide is Bifunctional trans-3-hydroxy-L-proline dehydratase/2-epimerase (Pseudomonas aeruginosa (strain ATCC 15692 / DSM 22644 / CIP 104116 / JCM 14847 / LMG 12228 / 1C / PRS 101 / PAO1)).